The primary structure comprises 456 residues: Bifunctional protein GlmU (456 aa).

Residues 1-229 (MLNNAMSVVI…LSEVEGVNNR (229 aa)) are pyrophosphorylase. Residues 11–14 (LAAG), Lys25, Gln76, 81–82 (GT), 103–105 (YGD), Gly140, Glu154, Asn169, and Asn227 each bind UDP-N-acetyl-alpha-D-glucosamine. Residue Asp105 coordinates Mg(2+). Position 227 (Asn227) interacts with Mg(2+). The segment at 230 to 250 (LQLSRLERVYQSEQAEKLLLA) is linker. An N-acetyltransferase region spans residues 251 to 456 (GVMLRDPARF…EGWRRPVKKK (206 aa)). UDP-N-acetyl-alpha-D-glucosamine contacts are provided by Arg333 and Lys351. Residue His363 is the Proton acceptor of the active site. UDP-N-acetyl-alpha-D-glucosamine-binding residues include Tyr366 and Asn377. Acetyl-CoA-binding positions include Ala380, 386–387 (NY), Ser405, Ala423, and Arg440.

The protein in the N-terminal section; belongs to the N-acetylglucosamine-1-phosphate uridyltransferase family. It in the C-terminal section; belongs to the transferase hexapeptide repeat family. In terms of assembly, homotrimer. Mg(2+) serves as cofactor.

Its subcellular location is the cytoplasm. It carries out the reaction alpha-D-glucosamine 1-phosphate + acetyl-CoA = N-acetyl-alpha-D-glucosamine 1-phosphate + CoA + H(+). The catalysed reaction is N-acetyl-alpha-D-glucosamine 1-phosphate + UTP + H(+) = UDP-N-acetyl-alpha-D-glucosamine + diphosphate. The protein operates within nucleotide-sugar biosynthesis; UDP-N-acetyl-alpha-D-glucosamine biosynthesis; N-acetyl-alpha-D-glucosamine 1-phosphate from alpha-D-glucosamine 6-phosphate (route II): step 2/2. It functions in the pathway nucleotide-sugar biosynthesis; UDP-N-acetyl-alpha-D-glucosamine biosynthesis; UDP-N-acetyl-alpha-D-glucosamine from N-acetyl-alpha-D-glucosamine 1-phosphate: step 1/1. Its pathway is bacterial outer membrane biogenesis; LPS lipid A biosynthesis. Its function is as follows. Catalyzes the last two sequential reactions in the de novo biosynthetic pathway for UDP-N-acetylglucosamine (UDP-GlcNAc). The C-terminal domain catalyzes the transfer of acetyl group from acetyl coenzyme A to glucosamine-1-phosphate (GlcN-1-P) to produce N-acetylglucosamine-1-phosphate (GlcNAc-1-P), which is converted into UDP-GlcNAc by the transfer of uridine 5-monophosphate (from uridine 5-triphosphate), a reaction catalyzed by the N-terminal domain. The sequence is that of Bifunctional protein GlmU from Escherichia coli O81 (strain ED1a).